Consider the following 450-residue polypeptide: Flavin-containing monooxygenase FMO GS-OX-like 3 (450 aa).

17 to 22 (GAGPAG) lines the FAD pocket. Position 215–220 (215–220 (GNSSSA)) interacts with NADP(+).

This sequence belongs to the FMO family. Requires FAD as cofactor.

In terms of biological role, catalyzes the conversion of methylthioalkyl glucosinolates of any chain length into methylsulfinylalkyl glucosinolates. The polypeptide is Flavin-containing monooxygenase FMO GS-OX-like 3 (Arabidopsis thaliana (Mouse-ear cress)).